The following is a 283-amino-acid chain: Foldase protein PrsA 3 (283 aa).

Residues 1–21 (MKKKKIFIGTIISCVMLALSA) form the signal peptide. Cys22 is lipidated: N-palmitoyl cysteine. A lipid anchor (S-diacylglycerol cysteine) is attached at Cys22. One can recognise a PpiC domain in the interval 132-222 (KPEMKVSHIL…YGYHIIKVTD (91 aa)).

The protein belongs to the PrsA family.

The protein localises to the cell membrane. It catalyses the reaction [protein]-peptidylproline (omega=180) = [protein]-peptidylproline (omega=0). Plays a major role in protein secretion by helping the post-translocational extracellular folding of several secreted proteins. This is Foldase protein PrsA 3 (prsA3) from Bacillus cereus (strain ATCC 14579 / DSM 31 / CCUG 7414 / JCM 2152 / NBRC 15305 / NCIMB 9373 / NCTC 2599 / NRRL B-3711).